The primary structure comprises 181 residues: Adenine phosphoribosyltransferase (181 aa).

Belongs to the purine/pyrimidine phosphoribosyltransferase family. Homodimer.

The protein resides in the cytoplasm. It carries out the reaction AMP + diphosphate = 5-phospho-alpha-D-ribose 1-diphosphate + adenine. Its pathway is purine metabolism; AMP biosynthesis via salvage pathway; AMP from adenine: step 1/1. Functionally, catalyzes a salvage reaction resulting in the formation of AMP, that is energically less costly than de novo synthesis. The protein is Adenine phosphoribosyltransferase of Chromohalobacter salexigens (strain ATCC BAA-138 / DSM 3043 / CIP 106854 / NCIMB 13768 / 1H11).